The sequence spans 358 residues: Homoserine O-acetyltransferase (358 aa).

In terms of domain architecture, AB hydrolase-1 spans 41-343 (NAVLICHALT…DYGHDAFLVD (303 aa)). Residue Ser143 is the Nucleophile of the active site. Substrate is bound at residue Arg212. Active-site residues include Asp304 and His337. Substrate is bound at residue Asp338.

Homodimer.

It localises to the cytoplasm. The catalysed reaction is L-homoserine + acetyl-CoA = O-acetyl-L-homoserine + CoA. Its pathway is amino-acid biosynthesis; L-methionine biosynthesis via de novo pathway; O-acetyl-L-homoserine from L-homoserine: step 1/1. Functionally, transfers an acetyl group from acetyl-CoA to L-homoserine, forming acetyl-L-homoserine. Utilizes a ping-pong kinetic mechanism in which the acetyl group of acetyl-CoA is initially transferred to the enzyme to form an acetyl-enzyme intermediate before subsequent transfer to homoserine to form the final product, O-acetylhomoserine. This chain is Homoserine O-acetyltransferase, found in Haemophilus influenzae (strain ATCC 51907 / DSM 11121 / KW20 / Rd).